The following is a 317-amino-acid chain: Ribosomal protein L11 methyltransferase (317 aa).

4 residues coordinate S-adenosyl-L-methionine: Thr-158, Gly-179, Asp-201, and Asn-244.

It belongs to the methyltransferase superfamily. PrmA family.

It is found in the cytoplasm. The catalysed reaction is L-lysyl-[protein] + 3 S-adenosyl-L-methionine = N(6),N(6),N(6)-trimethyl-L-lysyl-[protein] + 3 S-adenosyl-L-homocysteine + 3 H(+). In terms of biological role, methylates ribosomal protein L11. This Streptococcus pyogenes serotype M6 (strain ATCC BAA-946 / MGAS10394) protein is Ribosomal protein L11 methyltransferase.